A 464-amino-acid polypeptide reads, in one-letter code: Secretion-regulating guanine nucleotide exchange factor (464 aa).

RCC1 repeat units follow at residues 14-66 (AAAL…VVTD), 68-118 (GSLF…ILTE), 119-170 (NGQV…AATA), 172-229 (GTVF…SLTD), 230-282 (AGEL…AQTV), 283-349 (TGKV…LAVI), and 350-401 (GGVC…ALCQ). Over residues 301 to 313 (VETREGWESEKQD) the composition is skewed to basic and acidic residues. Residues 301–323 (VETREGWESEKQDPSLPGSGPQK) form a disordered region. The segment at 411-464 (HPSVTSPSPDATKEARSQEAMEQERNQKERHAETSPQAQSDRFRNGGLVAETLE) is disordered. The segment covering 421–443 (ATKEARSQEAMEQERNQKERHAE) has biased composition (basic and acidic residues). Serine 427 carries the post-translational modification Phosphoserine.

Interacts with SEC5. The interaction occurs only in the presence of magnesium or manganese and is stimulated by dCTP or GTP.

The protein resides in the cytoplasm. It is found in the nucleus. Functionally, probable guanine nucleotide exchange factor (GEF), which may be involved in the secretion process. This Bos taurus (Bovine) protein is Secretion-regulating guanine nucleotide exchange factor (SERGEF).